Reading from the N-terminus, the 93-residue chain is Aspartyl/glutamyl-tRNA(Asn/Gln) amidotransferase subunit C (93 aa).

This sequence belongs to the GatC family. As to quaternary structure, heterotrimer of A, B and C subunits.

It carries out the reaction L-glutamyl-tRNA(Gln) + L-glutamine + ATP + H2O = L-glutaminyl-tRNA(Gln) + L-glutamate + ADP + phosphate + H(+). The catalysed reaction is L-aspartyl-tRNA(Asn) + L-glutamine + ATP + H2O = L-asparaginyl-tRNA(Asn) + L-glutamate + ADP + phosphate + 2 H(+). Its function is as follows. Allows the formation of correctly charged Asn-tRNA(Asn) or Gln-tRNA(Gln) through the transamidation of misacylated Asp-tRNA(Asn) or Glu-tRNA(Gln) in organisms which lack either or both of asparaginyl-tRNA or glutaminyl-tRNA synthetases. The reaction takes place in the presence of glutamine and ATP through an activated phospho-Asp-tRNA(Asn) or phospho-Glu-tRNA(Gln). The chain is Aspartyl/glutamyl-tRNA(Asn/Gln) amidotransferase subunit C from Methanococcoides burtonii (strain DSM 6242 / NBRC 107633 / OCM 468 / ACE-M).